Here is a 313-residue protein sequence, read N- to C-terminus: Olfactory receptor 8B3 (313 aa).

At 1 to 25 (MLARNNSLVTEFILAGLTDHPEFQQ) the chain is on the extracellular side. N-linked (GlcNAc...) asparagine glycosylation occurs at asparagine 5. A helical membrane pass occupies residues 26–46 (PLFFLFLVVYIVTMVGNLGLI). Residues 47-54 (ILFGLNSH) are Cytoplasmic-facing. Residues 55–75 (LHTPMYYFLFNLSFIDLCYSS) form a helical membrane-spanning segment. Topologically, residues 76–99 (VFTPKMLMNFVSKKNIISYVGCMT) are extracellular. Cysteine 97 and cysteine 189 are oxidised to a cystine. A helical membrane pass occupies residues 100 to 120 (QLFFFLFFVISECYMLTSMAY). The Cytoplasmic segment spans residues 121-139 (DRYVAICNPLLYKVTMSHQ). The helical transmembrane segment at 140-160 (VCSMLTFAAYIMGLAGATAHT) threads the bilayer. At 161–197 (GCMLRLTFCSANIINHYLCDILPLLQLSCTSTYVNEV) the chain is on the extracellular side. Residues 198–217 (VVLIVVGINIMVPSCTILIS) form a helical membrane-spanning segment. The Cytoplasmic portion of the chain corresponds to 218-237 (YVFIVTSILHIKSTQGRSKA). A helical transmembrane segment spans residues 238-258 (FSTCSSHVIALSLFFGSAAFM). Topologically, residues 259–270 (YIKYSSGSMEQG) are extracellular. The helical transmembrane segment at 271 to 291 (KVSSVFYTNVVPMLNPLIYSL) threads the bilayer. Over 292–313 (RNKDVKVALRKALIKIQRRNIF) the chain is Cytoplasmic.

Belongs to the G-protein coupled receptor 1 family.

The protein resides in the cell membrane. Functionally, odorant receptor. The protein is Olfactory receptor 8B3 (OR8B3) of Homo sapiens (Human).